We begin with the raw amino-acid sequence, 184 residues long: ATP synthase subunit b, chloroplastic (184 aa).

The chain crosses the membrane as a helical span at residues 31-53 (LINLAVVIGVLVYFGKGVLTTIL).

This sequence belongs to the ATPase B chain family. F-type ATPases have 2 components, F(1) - the catalytic core - and F(0) - the membrane proton channel. F(1) has five subunits: alpha(3), beta(3), gamma(1), delta(1), epsilon(1). F(0) has four main subunits: a(1), b(1), b'(1) and c(10-14). The alpha and beta chains form an alternating ring which encloses part of the gamma chain. F(1) is attached to F(0) by a central stalk formed by the gamma and epsilon chains, while a peripheral stalk is formed by the delta, b and b' chains.

The protein localises to the plastid. Its subcellular location is the chloroplast thylakoid membrane. In terms of biological role, f(1)F(0) ATP synthase produces ATP from ADP in the presence of a proton or sodium gradient. F-type ATPases consist of two structural domains, F(1) containing the extramembraneous catalytic core and F(0) containing the membrane proton channel, linked together by a central stalk and a peripheral stalk. During catalysis, ATP synthesis in the catalytic domain of F(1) is coupled via a rotary mechanism of the central stalk subunits to proton translocation. Its function is as follows. Component of the F(0) channel, it forms part of the peripheral stalk, linking F(1) to F(0). The sequence is that of ATP synthase subunit b, chloroplastic from Staurastrum punctulatum (Green alga).